A 316-amino-acid polypeptide reads, in one-letter code: Peroxidase 31 (316 aa).

A signal peptide spans 1–19; that stretch reads MASLKSLFLLFLFFFTAQS. 4 cysteine pairs are disulfide-bonded: cysteine 30-cysteine 111, cysteine 63-cysteine 68, cysteine 117-cysteine 312, and cysteine 196-cysteine 222. Residue histidine 61 is the Proton acceptor of the active site. 4 residues coordinate Ca(2+): aspartate 62, glycine 67, aspartate 69, and serine 71. Proline 159 lines the substrate pocket. Position 189 (histidine 189) interacts with heme b. A Ca(2+)-binding site is contributed by serine 190. An N-linked (GlcNAc...) asparagine glycan is attached at asparagine 206. Ca(2+)-binding residues include aspartate 236, threonine 239, and aspartate 244.

Belongs to the peroxidase family. Classical plant (class III) peroxidase subfamily. Heme b serves as cofactor. Requires Ca(2+) as cofactor.

Its subcellular location is the secreted. The catalysed reaction is 2 a phenolic donor + H2O2 = 2 a phenolic radical donor + 2 H2O. Removal of H(2)O(2), oxidation of toxic reductants, biosynthesis and degradation of lignin, suberization, auxin catabolism, response to environmental stresses such as wounding, pathogen attack and oxidative stress. These functions might be dependent on each isozyme/isoform in each plant tissue. The protein is Peroxidase 31 (PER31) of Arabidopsis thaliana (Mouse-ear cress).